A 338-amino-acid chain; its full sequence is Lipoate-protein ligase A (338 aa).

A BPL/LPL catalytic domain is found at Pro-29–Val-216. Residues Arg-71, Gly-76–Phe-79, and Lys-134 each bind ATP. Lys-134 contributes to the (R)-lipoate binding site.

It belongs to the LplA family. In terms of assembly, monomer.

The protein localises to the cytoplasm. It carries out the reaction L-lysyl-[lipoyl-carrier protein] + (R)-lipoate + ATP = N(6)-[(R)-lipoyl]-L-lysyl-[lipoyl-carrier protein] + AMP + diphosphate + H(+). It participates in protein modification; protein lipoylation via exogenous pathway; protein N(6)-(lipoyl)lysine from lipoate: step 1/2. Its pathway is protein modification; protein lipoylation via exogenous pathway; protein N(6)-(lipoyl)lysine from lipoate: step 2/2. In terms of biological role, catalyzes both the ATP-dependent activation of exogenously supplied lipoate to lipoyl-AMP and the transfer of the activated lipoyl onto the lipoyl domains of lipoate-dependent enzymes. This is Lipoate-protein ligase A from Escherichia coli (strain SMS-3-5 / SECEC).